A 420-amino-acid chain; its full sequence is Anaerobic glycerol-3-phosphate dehydrogenase subunit B (420 aa).

The protein belongs to the anaerobic G-3-P dehydrogenase subunit B family. As to quaternary structure, composed of a catalytic GlpA/B dimer and of membrane bound GlpC. It depends on FMN as a cofactor.

The enzyme catalyses a quinone + sn-glycerol 3-phosphate = dihydroxyacetone phosphate + a quinol. It functions in the pathway polyol metabolism; glycerol degradation via glycerol kinase pathway; glycerone phosphate from sn-glycerol 3-phosphate (anaerobic route): step 1/1. Conversion of glycerol 3-phosphate to dihydroxyacetone. Uses fumarate or nitrate as electron acceptor. The polypeptide is Anaerobic glycerol-3-phosphate dehydrogenase subunit B (Pectobacterium carotovorum subsp. carotovorum (strain PC1)).